The following is a 369-amino-acid chain: 3-dehydroquinate synthase (369 aa).

NAD(+) is bound by residues 75–80 (DGEEHK), 109–113 (GVIGD), 133–134 (TT), lysine 146, lysine 155, and 173–176 (TLKT). Glutamate 188, histidine 251, and histidine 268 together coordinate Zn(2+).

It belongs to the sugar phosphate cyclases superfamily. Dehydroquinate synthase family. Requires Co(2+) as cofactor. Zn(2+) serves as cofactor. NAD(+) is required as a cofactor.

It is found in the cytoplasm. The enzyme catalyses 7-phospho-2-dehydro-3-deoxy-D-arabino-heptonate = 3-dehydroquinate + phosphate. It functions in the pathway metabolic intermediate biosynthesis; chorismate biosynthesis; chorismate from D-erythrose 4-phosphate and phosphoenolpyruvate: step 2/7. In terms of biological role, catalyzes the conversion of 3-deoxy-D-arabino-heptulosonate 7-phosphate (DAHP) to dehydroquinate (DHQ). This chain is 3-dehydroquinate synthase, found in Legionella pneumophila (strain Paris).